The sequence spans 380 residues: Cytochrome b (380 aa).

A run of 4 helical transmembrane segments spans residues 34-54, 78-99, 114-134, and 179-199; these read FGSL…FLAM, WLIR…YLHI, WNIG…GYVL, and FFTF…IHLL. Heme b-binding residues include H84 and H98. H183 and H197 together coordinate heme b. Position 202 (H202) interacts with a ubiquinone. 4 helical membrane passes run 227 to 247, 289 to 309, 321 to 341, and 348 to 368; these read YKDL…ALFT, LGGV…PILH, ITQI…WIGG, and FITI…ILFP.

Belongs to the cytochrome b family. As to quaternary structure, the cytochrome bc1 complex contains 3 respiratory subunits (MT-CYB, CYC1 and UQCRFS1), 2 core proteins (UQCRC1 and UQCRC2) and probably 6 low-molecular weight proteins. Heme b is required as a cofactor.

It localises to the mitochondrion inner membrane. In terms of biological role, component of the ubiquinol-cytochrome c reductase complex (complex III or cytochrome b-c1 complex) that is part of the mitochondrial respiratory chain. The b-c1 complex mediates electron transfer from ubiquinol to cytochrome c. Contributes to the generation of a proton gradient across the mitochondrial membrane that is then used for ATP synthesis. The polypeptide is Cytochrome b (mt-cyb) (Hemitrygon laosensis (Mekong freshwater stingray)).